Here is a 921-residue protein sequence, read N- to C-terminus: TRPM8 channel-associated factor 1 (921 aa).

The region spanning 542–841 is the Peptidase M60 domain; it reads YCWMSTGLYI…TYLQLQEAFG (300 aa).

This sequence belongs to the TCAF family. As to quaternary structure, interacts with TRPM8 (via N-terminus and C-terminus domains); the interaction inhibits TRPM8 channel activity. Interacts with TRPV6.

The protein localises to the cell membrane. Functionally, positively regulates the plasma membrane cation channel TRPM8 activity. Involved in the recruitment of TRPM8 to the cell surface. Promotes prostate cancer cell migration inhibition in a TRPM8-dependent manner. This Bos taurus (Bovine) protein is TRPM8 channel-associated factor 1.